The following is a 351-amino-acid chain: Dihydroorotate dehydrogenase (quinone) (351 aa).

Residues 67 to 71 and Thr91 contribute to the FMN site; that span reads AGFDK. Lys71 lines the substrate pocket. 116-120 serves as a coordination point for substrate; it reads NAMGF. Asn145 and Asn178 together coordinate FMN. Position 178 (Asn178) interacts with substrate. Ser181 acts as the Nucleophile in catalysis. Asn183 is a substrate binding site. Positions 214 and 242 each coordinate FMN. 243 to 244 is a substrate binding site; that stretch reads NT. FMN contacts are provided by residues Gly262, Gly291, and 312-313; that span reads YS.

Belongs to the dihydroorotate dehydrogenase family. Type 2 subfamily. In terms of assembly, monomer. FMN is required as a cofactor.

The protein localises to the cell membrane. It catalyses the reaction (S)-dihydroorotate + a quinone = orotate + a quinol. It participates in pyrimidine metabolism; UMP biosynthesis via de novo pathway; orotate from (S)-dihydroorotate (quinone route): step 1/1. In terms of biological role, catalyzes the conversion of dihydroorotate to orotate with quinone as electron acceptor. The polypeptide is Dihydroorotate dehydrogenase (quinone) (Helicobacter acinonychis (strain Sheeba)).